A 137-amino-acid polypeptide reads, in one-letter code: Small ribosomal subunit protein uS12 (137 aa).

The tract at residues 1-26 is disordered; that stretch reads MPTINQLVRKPRQSKIKKSTSPALNK. Positions 9-18 are enriched in basic residues; that stretch reads RKPRQSKIKK.

The protein belongs to the universal ribosomal protein uS12 family. As to quaternary structure, part of the 30S ribosomal subunit. Contacts proteins S8 and S17. May interact with IF1 in the 30S initiation complex.

In terms of biological role, with S4 and S5 plays an important role in translational accuracy. Functionally, interacts with and stabilizes bases of the 16S rRNA that are involved in tRNA selection in the A site and with the mRNA backbone. Located at the interface of the 30S and 50S subunits, it traverses the body of the 30S subunit contacting proteins on the other side and probably holding the rRNA structure together. The combined cluster of proteins S8, S12 and S17 appears to hold together the shoulder and platform of the 30S subunit. This is Small ribosomal subunit protein uS12 from Listeria innocua serovar 6a (strain ATCC BAA-680 / CLIP 11262).